Consider the following 133-residue polypeptide: C-C motif chemokine 21b (133 aa).

The signal sequence occupies residues 1–23 (MAQMMTLSLLSLVLALCIPWTQG). Intrachain disulfides connect Cys31–Cys57, Cys32–Cys75, and Cys103–Cys122. The tract at residues 87-133 (MRRLDQPPAPGKQSPGCRKNRGTSKSGKKGKGSKGCKRTEQTQPSRG) is disordered. The C-terminal basic extension stretch occupies residues 98–133 (KQSPGCRKNRGTSKSGKKGKGSKGCKRTEQTQPSRG). A compositionally biased stretch (basic residues) spans 104 to 122 (RKNRGTSKSGKKGKGSKGC).

It belongs to the intercrine beta (chemokine CC) family. Binds to CCR7 and to CXCR3. Interacts with PDPN; relocalizes PDPN to the basolateral membrane. Interacts with GPR174. In terms of tissue distribution, expressed strongly in lung, spleen, thymus, peripheral and mesentric lymph nodes. Also expressed in the testis, kidney, liver, and heart.

The protein resides in the secreted. Functionally, inhibits hemopoiesis and stimulates chemotaxis. Chemotactic in vitro for thymocytes and activated T-cells, but not for B-cells, macrophages, or neutrophils. Potent mesangial cell chemoattractant. Shows preferential activity towards naive T-cells. May play a role in mediating homing of lymphocytes to secondary lymphoid organs. The chain is C-C motif chemokine 21b (Ccl21b) from Mus musculus (Mouse).